Here is a 132-residue protein sequence, read N- to C-terminus: MWLSLVAIGAGAALGANLRWLLGMWLNALFPALPPGTLAANWLGAWLIGIAIALFAQLPQLSPEWRLFVVTGFLGALTTFSTFSAEMFGNLQAGRYAMALTGIAVHVAGSLAMTGLGIATFGALKQLGGIIK.

Transmembrane regions (helical) follow at residues 5 to 25 (LVAIGAGAALGANLRWLLGMW), 36 to 56 (GTLAANWLGAWLIGIAIALFA), 68 to 88 (FVVTGFLGALTTFSTFSAEMF), and 103 to 123 (IAVHVAGSLAMTGLGIATFGA). Glycine 75 and threonine 78 together coordinate Na(+).

Belongs to the fluoride channel Fluc/FEX (TC 1.A.43) family.

It is found in the cell inner membrane. It carries out the reaction fluoride(in) = fluoride(out). With respect to regulation, na(+) is not transported, but it plays an essential structural role and its presence is essential for fluoride channel function. Its function is as follows. Fluoride-specific ion channel. Important for reducing fluoride concentration in the cell, thus reducing its toxicity. This is Fluoride-specific ion channel FluC from Chromohalobacter salexigens (strain ATCC BAA-138 / DSM 3043 / CIP 106854 / NCIMB 13768 / 1H11).